Here is a 476-residue protein sequence, read N- to C-terminus: Protein PAL OF QUIRKY (476 aa).

An N-terminal signal peptide occupies residues 1–14; sequence MTTVSSAFATVAEG. The tract at residues 204–256 is disordered; it reads TRRTNSGTSGSGDGNGGICGQESMMLETNSSFGSTSSSVSSSNLPPIKSSGED. Residues 212–222 show a composition bias toward gly residues; it reads SGSGDGNGGIC. A compositionally biased stretch (low complexity) spans 233 to 252; the sequence is SSFGSTSSSVSSSNLPPIKS.

Homodimer. Interacts with QKY and SUB/SCM at the plasma membrane. In terms of tissue distribution, observed in seedlings, roots, shoots, leaves, stems, inflorescence and flowers.

The protein resides in the cell membrane. The protein localises to the endomembrane system. In terms of biological role, collaboratively with SUB and QKY, regulates cell growth anisotropy during gynoecium development, thus linking together cell-cell communication and cellular growth. In Arabidopsis thaliana (Mouse-ear cress), this protein is Protein PAL OF QUIRKY.